We begin with the raw amino-acid sequence, 203 residues long: Fucoxanthin-chlorophyll a-c binding protein, chloroplastic (203 aa).

A chloroplast-targeting transit peptide spans Met-1–Met-30.

This sequence belongs to the fucoxanthin chlorophyll protein family. The LHC complex of chromophytic algae is composed of fucoxanthin, chlorophyll A and C bound non-covalently by fucoxanthin chlorophyll proteins (FCPs). The ratio of pigments in this LHC is; fucoxanthin: chlorophyll C: chlorophyll A; (0.6-1): (0.1-0.3): (1).

The protein resides in the plastid. It is found in the chloroplast thylakoid membrane. Functionally, the light-harvesting complex (LHC) functions as a light receptor, it captures and delivers excitation energy to photosystems with which it is closely associated. Energy is transferred from the carotenoid and chlorophyll C (or B) to chlorophyll A and the photosynthetic reaction centers where it is used to synthesize ATP and reducing power. This Trieres chinensis (Marine centric diatom) protein is Fucoxanthin-chlorophyll a-c binding protein, chloroplastic (FCPA).